The following is a 651-amino-acid chain: J domain-containing protein required for chloroplast accumulation response 1 (651 aa).

Over residues 1 to 17 (MQTLPSSETVLLGSNSA) the composition is skewed to polar residues. Disordered regions lie at residues 1–56 (MQTL…TRHS), 114–138 (GSRI…QFSL), 156–176 (LNKN…SKAD), 250–291 (KLGK…TDLK), and 308–526 (KPLD…IDEP). Ser-56 is subject to Phosphoserine. The segment covering 126–137 (SSSGTSSPSQFS) has biased composition (low complexity). 6 stretches are compositionally biased toward basic and acidic residues: residues 250 to 259 (KLGKNEEGDG), 281 to 291 (TKEEKTETDLK), 337 to 357 (IFHE…EVRK), 405 to 416 (VGKDGVKGKVSD), 441 to 456 (RAKE…DGSN), and 488 to 497 (QKKDSDRESM). The stretch at 532-562 (DVEDITQDENKMEEANKDAEEIKNIDAKIRK) forms a coiled coil. The region spanning 586–651 (SGWKPVPLMD…WDHFNTLGPV (66 aa)) is the J domain.

In terms of tissue distribution, expressed in leaves and stems, but not in roots.

The protein resides in the cytoplasm. Functionally, required for chloroplast photorelocation movement; chloroplast accumulation upon low blue light and for chloroplast movement to the bottom of cells in darkness, by modulating chloroplast actin (Cp-actin) filaments distribution, appearance and disappearance. May mediate a slight resistance to aluminum in root hair cells. This chain is J domain-containing protein required for chloroplast accumulation response 1 (JAC1), found in Arabidopsis thaliana (Mouse-ear cress).